The chain runs to 428 residues: Immunoglobulin superfamily member 11 (428 aa).

The signal sequence occupies residues 1 to 22 (MTRRRSAPASWLLVSLLGVATS). The Ig-like V-type domain maps to 23–136 (LEVSESPGSV…DRGGRNIGVT (114 aa)). Over 23-240 (LEVSESPGSV…QVISPQPRSV (218 aa)) the chain is Extracellular. 2 disulfides stabilise this stretch: cysteine 44/cysteine 120 and cysteine 165/cysteine 215. N-linked (GlcNAc...) asparagine glycosylation is present at asparagine 102. The Ig-like C2-type domain occupies 144 to 234 (PSAPQCQIQG…TCLLDLQVIS (91 aa)). Residues 241-261 (GVIAGAVGTGAVLIVICLALI) traverse the membrane as a helical segment. At 262–428 (SGAFFYWRSK…PAQSRAGSLV (167 aa)) the chain is on the cytoplasmic side. At arginine 375 the chain carries Omega-N-methylarginine. Positions 376-389 (GSSPQVLPRNNGSV) are enriched in polar residues. Positions 376–396 (GSSPQVLPRNNGSVSRKPWPQ) are disordered.

N-glycosylated. As to expression, highly expressed in testis and detected in kidney and adrenal gland. In brain, expressed in commissure fibers of the corpus callosum and pyramidal cell layers of the dentate gyrus and hippocampus where it is probably expressed by both neurons and glial cells.

The protein localises to the cell membrane. Functionally, functions as a cell adhesion molecule through homophilic interaction. Stimulates cell growth. In Mus musculus (Mouse), this protein is Immunoglobulin superfamily member 11 (Igsf11).